A 419-amino-acid polypeptide reads, in one-letter code: Appendage-associated protein (419 aa).

Residues 1–39 (MIVTYGTVGCPVSRGGSPGCGRRIAEELRLAEDARLRLA) form the signal peptide. A coiled-coil region spans residues 232–262 (ERQKAQRRREERAAKAREELRKELNDIDAKW).

It is found in the secreted. In terms of biological role, associates with actin filament appendages that are formed in the inclusion appendages of the parasitophorous vacuole during infection of the host erythrocyte. This is Appendage-associated protein from Anaplasma marginale (strain St. Maries).